Here is a 546-residue protein sequence, read N- to C-terminus: CTP synthase (546 aa).

An amidoligase domain region spans residues Met-1–Ile-266. Ser-14 contributes to the CTP binding site. Ser-14 serves as a coordination point for UTP. ATP-binding positions include Ser-15 to Ile-20 and Asp-72. Positions 72 and 140 each coordinate Mg(2+). Residues Asp-147–Glu-149, Lys-187–Gln-192, and Lys-223 each bind CTP. Residues Lys-187–Gln-192 and Lys-223 each bind UTP. A Glutamine amidotransferase type-1 domain is found at Asn-291–Lys-544. L-glutamine is bound at residue Gly-352. Cys-379 (nucleophile; for glutamine hydrolysis) is an active-site residue. L-glutamine contacts are provided by residues Leu-380–Gln-383, Glu-403, and Arg-470. Catalysis depends on residues His-517 and Glu-519.

This sequence belongs to the CTP synthase family. In terms of assembly, homotetramer.

The catalysed reaction is UTP + L-glutamine + ATP + H2O = CTP + L-glutamate + ADP + phosphate + 2 H(+). It catalyses the reaction L-glutamine + H2O = L-glutamate + NH4(+). It carries out the reaction UTP + NH4(+) + ATP = CTP + ADP + phosphate + 2 H(+). It participates in pyrimidine metabolism; CTP biosynthesis via de novo pathway; CTP from UDP: step 2/2. With respect to regulation, allosterically activated by GTP, when glutamine is the substrate; GTP has no effect on the reaction when ammonia is the substrate. The allosteric effector GTP functions by stabilizing the protein conformation that binds the tetrahedral intermediate(s) formed during glutamine hydrolysis. Inhibited by the product CTP, via allosteric rather than competitive inhibition. Catalyzes the ATP-dependent amination of UTP to CTP with either L-glutamine or ammonia as the source of nitrogen. Regulates intracellular CTP levels through interactions with the four ribonucleotide triphosphates. The chain is CTP synthase from Wigglesworthia glossinidia brevipalpis.